The chain runs to 552 residues: Hydroxylamine reductase (552 aa).

4 residues coordinate [2Fe-2S] cluster: Cys5, Cys8, Cys20, and Cys27. Hybrid [4Fe-2O-2S] cluster-binding residues include His251, Glu275, Cys319, Cys407, Cys435, Cys460, Glu494, and Lys496. Position 407 is a cysteine persulfide (Cys407).

Belongs to the HCP family. It depends on [2Fe-2S] cluster as a cofactor. Hybrid [4Fe-2O-2S] cluster serves as cofactor.

It localises to the cytoplasm. It catalyses the reaction A + NH4(+) + H2O = hydroxylamine + AH2 + H(+). Its function is as follows. Catalyzes the reduction of hydroxylamine to form NH(3) and H(2)O. This chain is Hydroxylamine reductase, found in Shigella boydii serotype 4 (strain Sb227).